We begin with the raw amino-acid sequence, 692 residues long: Potassium-transporting ATPase ATP-binding subunit (692 aa).

4 helical membrane-spanning segments follow: residues 50 to 70 (PIMFVVEIGFIITFILSFLPS), 77 to 97 (GWFNITVSLILLFTVLFANFA), 240 to 260 (LTLIFLIVVVTLPIFTNYLGF), and 266 to 286 (VLVALLVCLIPTTIGGLLSAI). Catalysis depends on Asp-319, which acts as the 4-aspartylphosphate intermediate. ATP contacts are provided by residues Asp-356, Glu-360, 388-395 (FKAETRMS), and Lys-407. Mg(2+) contacts are provided by Asp-530 and Asp-534. The next 3 membrane-spanning stretches (helical) occupy residues 600 to 620 (FAIIPAMFTLAIPQMEALNIM), 628 to 648 (AILSALIFNAVIIPLLIPLAM), and 672 to 692 (GGVIVPFIGIKVIDIIVGLFI).

This sequence belongs to the cation transport ATPase (P-type) (TC 3.A.3) family. Type IA subfamily. As to quaternary structure, the system is composed of three essential subunits: KdpA, KdpB and KdpC.

It is found in the cell membrane. The catalysed reaction is K(+)(out) + ATP + H2O = K(+)(in) + ADP + phosphate + H(+). Part of the high-affinity ATP-driven potassium transport (or Kdp) system, which catalyzes the hydrolysis of ATP coupled with the electrogenic transport of potassium into the cytoplasm. This subunit is responsible for energy coupling to the transport system and for the release of the potassium ions to the cytoplasm. The chain is Potassium-transporting ATPase ATP-binding subunit from Bacillus cereus (strain 03BB102).